The primary structure comprises 285 residues: Probable endonuclease 4 (285 aa).

Zn(2+) contacts are provided by His-69, His-109, Glu-145, Asp-179, His-182, His-216, Asp-229, His-231, and Glu-261.

Belongs to the AP endonuclease 2 family. Requires Zn(2+) as cofactor.

It carries out the reaction Endonucleolytic cleavage to 5'-phosphooligonucleotide end-products.. Its function is as follows. Endonuclease IV plays a role in DNA repair. It cleaves phosphodiester bonds at apurinic or apyrimidinic (AP) sites, generating a 3'-hydroxyl group and a 5'-terminal sugar phosphate. This is Probable endonuclease 4 from Salmonella schwarzengrund (strain CVM19633).